The sequence spans 406 residues: Argininosuccinate synthase (406 aa).

Position 8 to 16 (8 to 16 (AYSGGLDTS)) interacts with ATP. Position 86 (Tyr86) interacts with L-citrulline. Gly116 is an ATP binding site. L-aspartate is bound by residues Thr118, Asn122, and Asp123. Position 122 (Asn122) interacts with L-citrulline. Residues Arg126, Ser174, Ser183, Glu259, and Tyr271 each coordinate L-citrulline.

This sequence belongs to the argininosuccinate synthase family. Type 1 subfamily. In terms of assembly, homotetramer.

Its subcellular location is the cytoplasm. It carries out the reaction L-citrulline + L-aspartate + ATP = 2-(N(omega)-L-arginino)succinate + AMP + diphosphate + H(+). It functions in the pathway amino-acid biosynthesis; L-arginine biosynthesis; L-arginine from L-ornithine and carbamoyl phosphate: step 2/3. The polypeptide is Argininosuccinate synthase (Oenococcus oeni (strain ATCC BAA-331 / PSU-1)).